The chain runs to 107 residues: MKGGLGNIMKQAQQLQERLQKTQEELAQVEVQGHAGGNLVEVTMTCRHDVRRVRIDPSLLTDGDQEMLEDLVAAAINDAVRTAEKVSAERMSEVTGGMNIPGMNLPF.

Belongs to the YbaB/EbfC family. As to quaternary structure, homodimer.

It is found in the cytoplasm. The protein resides in the nucleoid. Binds to DNA and alters its conformation. May be involved in regulation of gene expression, nucleoid organization and DNA protection. The protein is Nucleoid-associated protein Lferr_1592 of Acidithiobacillus ferrooxidans (strain ATCC 53993 / BNL-5-31) (Leptospirillum ferrooxidans (ATCC 53993)).